We begin with the raw amino-acid sequence, 335 residues long: Cytoskeleton protein RodZ (335 aa).

At 1–111 (MNTEATHDQN…LGKRRKKRDG (111 aa)) the chain is on the cytoplasmic side. Positions 19–71 (LRNAREQLGLSQQAVAERLCLKVSTVRDIEEDKAPADLASTFLRGYIRSYARL) constitute an HTH cro/C1-type domain. Residues 30–49 (QQAVAERLCLKVSTVRDIEE) constitute a DNA-binding region (H-T-H motif). The helical; Signal-anchor for type II membrane protein transmembrane segment at 112–132 (WLMTFTWLVLFVVIGLSGAWW) threads the bilayer. At 133-335 (WQDHKAQQEE…TLNAEQSPAQ (203 aa)) the chain is on the periplasmic side. The segment covering 148 to 164 (DQSSAELNNNQSQSVPL) has biased composition (polar residues). Residues 148–244 (DQSSAELNNN…PLPTDQAGVT (97 aa)) are disordered. Composition is skewed to low complexity over residues 165–205 (DTST…DPQQ) and 217–239 (DTAA…LPTD).

This sequence belongs to the RodZ family.

It is found in the cell inner membrane. In terms of biological role, cytoskeletal protein that is involved in cell-shape control through regulation of the length of the long axis. This is Cytoskeleton protein RodZ from Escherichia coli O81 (strain ED1a).